The primary structure comprises 487 residues: Malonate-semialdehyde dehydrogenase 2 (487 aa).

Residues Phe-154, Lys-178, Glu-181, Arg-182, and Ser-231 each coordinate NAD(+). Cys-286 acts as the Nucleophile in catalysis. Position 386 (Glu-386) interacts with NAD(+).

This sequence belongs to the aldehyde dehydrogenase family. IolA subfamily. Homotetramer.

The enzyme catalyses 3-oxopropanoate + NAD(+) + CoA + H2O = hydrogencarbonate + acetyl-CoA + NADH + H(+). It catalyses the reaction 2-methyl-3-oxopropanoate + NAD(+) + CoA + H2O = propanoyl-CoA + hydrogencarbonate + NADH + H(+). It participates in polyol metabolism; myo-inositol degradation into acetyl-CoA; acetyl-CoA from myo-inositol: step 7/7. Its function is as follows. Catalyzes the oxidation of malonate semialdehyde (MSA) and methylmalonate semialdehyde (MMSA) into acetyl-CoA and propanoyl-CoA, respectively. Is involved in a myo-inositol catabolic pathway. Bicarbonate, and not CO2, is the end-product of the enzymatic reaction. This chain is Malonate-semialdehyde dehydrogenase 2, found in Bacillus thuringiensis (strain Al Hakam).